The chain runs to 278 residues: Pantothenate synthetase (278 aa).

An ATP-binding site is contributed by 27 to 34; sequence MGNLHEGH. The Proton donor role is filled by His-34. Residue Gln-58 participates in (R)-pantoate binding. Gln-58 is a binding site for beta-alanine. 147–150 serves as a coordination point for ATP; sequence GEKD. (R)-pantoate is bound at residue Gln-153. 184 to 187 is an ATP binding site; it reads YSSR.

Belongs to the pantothenate synthetase family. As to quaternary structure, homodimer.

It localises to the cytoplasm. The enzyme catalyses (R)-pantoate + beta-alanine + ATP = (R)-pantothenate + AMP + diphosphate + H(+). It functions in the pathway cofactor biosynthesis; (R)-pantothenate biosynthesis; (R)-pantothenate from (R)-pantoate and beta-alanine: step 1/1. Its function is as follows. Catalyzes the condensation of pantoate with beta-alanine in an ATP-dependent reaction via a pantoyl-adenylate intermediate. The protein is Pantothenate synthetase of Acidithiobacillus ferrooxidans (strain ATCC 23270 / DSM 14882 / CIP 104768 / NCIMB 8455) (Ferrobacillus ferrooxidans (strain ATCC 23270)).